Consider the following 182-residue polypeptide: Trypsin inhibitor 2 (182 aa).

Q1 carries the pyrrolidone carboxylic acid modification. Cystine bridges form between C40–C84 and C136–C147.

The protein belongs to the protease inhibitor I3 (leguminous Kunitz-type inhibitor) family.

The polypeptide is Trypsin inhibitor 2 (Psophocarpus tetragonolobus (Winged bean)).